The chain runs to 403 residues: Arginine biosynthesis bifunctional protein ArgJ (403 aa).

Residues threonine 151, lysine 177, threonine 188, glutamate 275, asparagine 398, and serine 403 each contribute to the substrate site. The Nucleophile role is filled by threonine 188.

This sequence belongs to the ArgJ family. Heterotetramer of two alpha and two beta chains.

It is found in the cytoplasm. It catalyses the reaction N(2)-acetyl-L-ornithine + L-glutamate = N-acetyl-L-glutamate + L-ornithine. It carries out the reaction L-glutamate + acetyl-CoA = N-acetyl-L-glutamate + CoA + H(+). It functions in the pathway amino-acid biosynthesis; L-arginine biosynthesis; L-ornithine and N-acetyl-L-glutamate from L-glutamate and N(2)-acetyl-L-ornithine (cyclic): step 1/1. Its pathway is amino-acid biosynthesis; L-arginine biosynthesis; N(2)-acetyl-L-ornithine from L-glutamate: step 1/4. Its function is as follows. Catalyzes two activities which are involved in the cyclic version of arginine biosynthesis: the synthesis of N-acetylglutamate from glutamate and acetyl-CoA as the acetyl donor, and of ornithine by transacetylation between N(2)-acetylornithine and glutamate. The polypeptide is Arginine biosynthesis bifunctional protein ArgJ (Caulobacter vibrioides (strain ATCC 19089 / CIP 103742 / CB 15) (Caulobacter crescentus)).